The following is a 274-amino-acid chain: Diaminopimelate epimerase (274 aa).

Asn-11 and Asn-60 together coordinate substrate. Cys-69 serves as the catalytic Proton donor. Substrate-binding positions include 70–71, Asn-191, and 209–210; these read GN and ER. Catalysis depends on Cys-218, which acts as the Proton acceptor. 219–220 provides a ligand contact to substrate; that stretch reads GS.

Belongs to the diaminopimelate epimerase family. In terms of assembly, homodimer.

The protein localises to the cytoplasm. The enzyme catalyses (2S,6S)-2,6-diaminopimelate = meso-2,6-diaminopimelate. Its pathway is amino-acid biosynthesis; L-lysine biosynthesis via DAP pathway; DL-2,6-diaminopimelate from LL-2,6-diaminopimelate: step 1/1. Its function is as follows. Catalyzes the stereoinversion of LL-2,6-diaminopimelate (L,L-DAP) to meso-diaminopimelate (meso-DAP), a precursor of L-lysine and an essential component of the bacterial peptidoglycan. The polypeptide is Diaminopimelate epimerase (Caldanaerobacter subterraneus subsp. tengcongensis (strain DSM 15242 / JCM 11007 / NBRC 100824 / MB4) (Thermoanaerobacter tengcongensis)).